A 284-amino-acid chain; its full sequence is L-ribulose-5-phosphate 3-epimerase UlaE (284 aa).

This sequence belongs to the L-ribulose-5-phosphate 3-epimerase family.

It catalyses the reaction L-ribulose 5-phosphate = L-xylulose 5-phosphate. The protein operates within cofactor degradation; L-ascorbate degradation; D-xylulose 5-phosphate from L-ascorbate: step 3/4. Functionally, catalyzes the isomerization of L-xylulose-5-phosphate to L-ribulose-5-phosphate. Is involved in the anaerobic L-ascorbate utilization. In Escherichia coli (strain K12 / MC4100 / BW2952), this protein is L-ribulose-5-phosphate 3-epimerase UlaE.